The sequence spans 390 residues: Pyruvate dehydrogenase E1 component subunit alpha-1, mitochondrial (390 aa).

A mitochondrion-targeting transit peptide spans 1–15; that stretch reads MAAAILLRRVPPARA. Residues H91, Y117, R118, G166, V168, D197, G198, A199, N226, and Y228 each contribute to the pyruvate site. Positions 117, 118, 166, 168, 197, 198, 199, and 226 each coordinate thiamine diphosphate. Residue D197 coordinates Mg(2+). Residues N226 and Y228 each contribute to the Mg(2+) site. Position 292 (H292) interacts with thiamine diphosphate. The tract at residues 293-312 is disordered; the sequence is SMSDPGSTYRTRDEISGVRQ. The segment covering 302–312 has biased composition (basic and acidic residues); the sequence is RTRDEISGVRQ.

Tetramer of 2 alpha and 2 beta subunits. Thiamine diphosphate is required as a cofactor. The cofactor is Mg(2+).

It localises to the mitochondrion matrix. It carries out the reaction N(6)-[(R)-lipoyl]-L-lysyl-[protein] + pyruvate + H(+) = N(6)-[(R)-S(8)-acetyldihydrolipoyl]-L-lysyl-[protein] + CO2. Functionally, the pyruvate dehydrogenase complex catalyzes the overall conversion of pyruvate to acetyl-CoA and CO(2). It contains multiple copies of three enzymatic components: pyruvate dehydrogenase (E1), dihydrolipoamide acetyltransferase (E2) and lipoamide dehydrogenase (E3). The sequence is that of Pyruvate dehydrogenase E1 component subunit alpha-1, mitochondrial from Oryza sativa subsp. japonica (Rice).